Reading from the N-terminus, the 371-residue chain is Glutamate 5-kinase (371 aa).

Lys-10 is an ATP binding site. Substrate is bound by residues Ser-50, Asp-137, and Asn-149. ATP contacts are provided by residues 169–170 and 208–214; these read SD and TGGMYTK. Residues 274–352 form the PUA domain; sequence QGKVYIDDGA…EEIKNILGED (79 aa).

The protein belongs to the glutamate 5-kinase family.

The protein resides in the cytoplasm. The catalysed reaction is L-glutamate + ATP = L-glutamyl 5-phosphate + ADP. Its pathway is amino-acid biosynthesis; L-proline biosynthesis; L-glutamate 5-semialdehyde from L-glutamate: step 1/2. Its function is as follows. Catalyzes the transfer of a phosphate group to glutamate to form L-glutamate 5-phosphate. This Dictyoglomus thermophilum (strain ATCC 35947 / DSM 3960 / H-6-12) protein is Glutamate 5-kinase.